A 493-amino-acid polypeptide reads, in one-letter code: Angiopoietin-related protein 2 (493 aa).

The signal sequence occupies residues 1-19 (MRPLCMTYWWLGLLATVGA). 2 coiled-coil regions span residues 77–115 (EVHL…VDGG) and 152–202 (ALEL…QLEE). N-linked (GlcNAc...) asparagine glycosylation is found at N164 and N192. The region spanning 269–489 (DKPSGPWRDC…KVVMMIRPNP (221 aa)) is the Fibrinogen C-terminal domain. 2 disulfide bridges follow: C278/C307 and C430/C443.

In terms of tissue distribution, widely expressed in heart, tongue, lung and skeletal muscle. Also found in lower levels in kidney, epididymis and testis.

Its subcellular location is the secreted. Its function is as follows. Induces sprouting in endothelial cells through an autocrine and paracrine action. In Mus musculus (Mouse), this protein is Angiopoietin-related protein 2 (Angptl2).